A 1625-amino-acid chain; its full sequence is MVGRVKVPCCSVCHTRYNEDERVPLLLQCGHGFCKDCLSKMFSTSSDTTLTCPRCRHVSVVGNSVQGLRKNYAMLALIHAASGGANFDCDYTDDEDDDDEEDGSDEDGARAARGFHASSSINSLCGPVIEVGAHPEMKLVRQIGEESSSGGFGGVEMWDATVAGGGGRCKHRVAVKKMTLTEDMDVEWMQGQLESLRRASMWCRNVCTFHGVVKMDGSLCLLMDRCFGSVQSEMQRNEGRLTLEQILRYGADVARGVAELHAAGVICMNIKPSNLLLDASGNAVVSDYGLAPILKKPTCQKTRPEFDSSKVTLYTDCVTLSPHYTAPEAWGPVKKLFWEDASGVSPESDAWSFGCTLVEMCTGSTPWDGLSREEIFQAVVKARKVPPQYERIVGVGIPRELWKMIGECLQFKPSKRPTFNAMLATFLRHLQEIPRSPSASPDNGIAKICEVNIVQAPRATNIGVFQDNPNNLHRVVLEGDFEGVRNILAKAAAGGGGSSVRSLLEAQNADGQSALHLACRRGSAELVEAILEYGEANVDIVDKDGDPPLVFALAAGSPQCVHVLIKKGANVRSRLREGSGPSVAHVCSYHGQPDCMRELLVAGADPNAVDDEGETVLHRAVAKKYTDCAIVILENGGSRSMTVSNAKCLTPLHMCVATWNVAVIKRWVEVSSPEEISQAINIPSPVGTALCMAASIRKDHEKEGRELVQILLAAGADPTAQDAQHGRTALHTAAMANNVELVRVILDAGVNANIRNVHNTIPLHMALARGANSCVSLLLESGSDCNIQDDEGDNAFHIAADAAKMIRENLDWLIVMLRSPDAAVDVRNHSGKTVRDFLEALPREWISEDLMEALLKRGVHLSPTIYEVGDWVKFKRGITTPLHGWQGAKPKSVGFVQTILEKEDMIIAFCSGEARVLANEVVKLIPLDRGQHVRLRADVKEPRFGWRGQSRDSVGTVLCVDEDGILRVGFPGASRGWKADPAEMERVEEFKVGDWVRIRQNLTSAKHGFGSVVPGSMGIVYCVRPDSSLLVELSYLPNPWHCEPEEVEPVAPFRIGDRVCVKRSVAEPRYAWGGETHHSVGKISEIENDGLLIIEIPNRPIPWQADPSDMEKIDDFKVGDWVRVKASVSSPKYGWEDITRNSIGVMHSLDEDGDVGIAFCFRSKPFSCSVTDVEKVTPFHVGQEIHMTPSITQPRLGWSNETPATIGKVMRIDMDGTLSAQVTGRQTLWRVSPGDAELLSGFEVGDWVRSKPSLGNRPSYDWSNVGRESIAVVHSIQETGYLELACCFRKGRWSTHYTDLEKIPALKVGQFVHFQKGITEPRWGWRAAKPDSRGIITTVHADGEVRVAFFGLPGLWRGDPADLEVEPMFEVGEWVRLREGVSCWKSVGPGSVGVVHGVGYEGDEWDGTTSVSFCGEQERWAGPTSHLEKAKKLVVGQKTRVKLAVKQPRFGWSGHSHGSVGTISAIDADGKLRIYTPAGSKTWMLDPSEVETIEEEELKIGDWVRVKASITTPTYQWGEVNPSSTGVVHRMEDGDLCVSFCFLDRLWLCKAGELERIRPFRIGDRVKIKDGLVTPRWGWGMETHASKGHVVGVDANGKLRIKFLWREGRPWIGDPADIVLDETSG.

The RING-type zinc-finger motif lies at 10–56; sequence CSVCHTRYNEDERVPLLLQCGHGFCKDCLSKMFSTSSDTTLTCPRCR. The span at 91-106 shows a compositional bias: acidic residues; that stretch reads YTDDEDDDDEEDGSDE. The segment at 91–110 is disordered; sequence YTDDEDDDDEEDGSDEDGAR. Residues 141–427 enclose the Protein kinase domain; that stretch reads RQIGEESSSG…TFNAMLATFL (287 aa). ATP-binding positions include 147–155 and Lys-176; that span reads SSSGGFGGV. 11 ANK repeats span residues 467 to 496, 510 to 540, 544 to 573, 579 to 608, 612 to 641, 647 to 676, 685 to 720, 725 to 754, 758 to 787, 791 to 826, and 832 to 863; these read DNPNNLHRVVLEGDFEGVRNILAKAAAGGG, DGQSALHLACRRGSAELVEAILEYGEANVDI, DGDPPLVFALAAGSPQCVHVLIKKGANVRS, SGPSVAHVCSYHGQPDCMRELLVAGADPNA, EGETVLHRAVAKKYTDCAIVILENGGSRSM, KCLTPLHMCVATWNVAVIKRWVEVSSPEEI, PVGTALCMAASIRKDHEKEGRELVQILLAAGADPTA, HGRTALHTAAMANNVELVRVILDAGVNANI, HNTIPLHMALARGANSCVSLLLESGSDCNI, EGDNAFHIAADAAKMIRENLDWLIVMLRSPDAAVDV, and KTVRDFLEALPREWISEDLMEALLKRGVHLSP.

Interacts with ABI5 and EDR1. Autophosphotylated and autoubiquitinated in vitro. In terms of processing, phosphorylation enhances self-ubiquitination. Post-translationally, autoubiquitinated in response to abscisic acid (ABA) and subsequently targeted to proteolysis. In terms of tissue distribution, expressed in all tissues of young seedlings. In flowering plants, only detected in the youngest part of the stem, anthers and the receptacle of immature siliques. Not found in mature leave, older parts of the stem, flower parts other than anthers or mature siliques.

Its subcellular location is the golgi apparatus. It localises to the trans-Golgi network. The protein resides in the early endosome. It catalyses the reaction L-seryl-[protein] + ATP = O-phospho-L-seryl-[protein] + ADP + H(+). It carries out the reaction L-threonyl-[protein] + ATP = O-phospho-L-threonyl-[protein] + ADP + H(+). The enzyme catalyses S-ubiquitinyl-[E2 ubiquitin-conjugating enzyme]-L-cysteine + [acceptor protein]-L-lysine = [E2 ubiquitin-conjugating enzyme]-L-cysteine + N(6)-ubiquitinyl-[acceptor protein]-L-lysine.. It functions in the pathway protein modification; protein ubiquitination. Mediates E2-dependent protein ubiquitination. Acts as a negative regulator of abscisic acid signaling. Required for ABI5 degradation, by mediating its ubiquitination. Together with EDR1, may regulate endocytic trafficking and/or the formation of signaling complexes on trans-Golgi network (TGN)/ early endosome (EE) vesicles during stress responses. The chain is E3 ubiquitin-protein ligase KEG (KEG) from Arabidopsis thaliana (Mouse-ear cress).